The following is a 429-amino-acid chain: 26S proteasome regulatory subunit 6A homolog (429 aa).

Positions 1-21 (MSSPPPAAAAAMAVDDADDDQ) are disordered. Position 217 to 224 (217 to 224 (GPPGTGKT)) interacts with ATP.

Belongs to the AAA ATPase family.

It localises to the cytoplasm. The protein resides in the nucleus. Its function is as follows. The 26S proteasome is involved in the ATP-dependent degradation of ubiquitinated proteins. The regulatory (or ATPase) complex confers ATP dependency and substrate specificity to the 26S complex. This Oryza sativa subsp. japonica (Rice) protein is 26S proteasome regulatory subunit 6A homolog (TBP1).